A 433-amino-acid chain; its full sequence is D-amino acid dehydrogenase (433 aa).

3–17 (VLVLGSGVIGTTSAY) contributes to the FAD binding site.

The protein belongs to the DadA oxidoreductase family. The cofactor is FAD.

It catalyses the reaction a D-alpha-amino acid + A + H2O = a 2-oxocarboxylate + AH2 + NH4(+). Its pathway is amino-acid degradation; D-alanine degradation; NH(3) and pyruvate from D-alanine: step 1/1. Functionally, oxidative deamination of D-amino acids. The protein is D-amino acid dehydrogenase of Pseudomonas savastanoi pv. phaseolicola (strain 1448A / Race 6) (Pseudomonas syringae pv. phaseolicola (strain 1448A / Race 6)).